A 65-amino-acid polypeptide reads, in one-letter code: Large ribosomal subunit protein bL35 (65 aa).

This sequence belongs to the bacterial ribosomal protein bL35 family.

The sequence is that of Large ribosomal subunit protein bL35 from Thiobacillus denitrificans (strain ATCC 25259 / T1).